Consider the following 274-residue polypeptide: Glutamate--cysteine ligase regulatory subunit (274 aa).

Phosphoserine is present on serine 59. Residue lysine 263 is modified to N6-acetyllysine.

The protein belongs to the aldo/keto reductase family. Glutamate--cysteine ligase light chain subfamily. In terms of assembly, heterodimer of a catalytic heavy chain and a regulatory light chain.

It functions in the pathway sulfur metabolism; glutathione biosynthesis; glutathione from L-cysteine and L-glutamate: step 1/2. The protein is Glutamate--cysteine ligase regulatory subunit (GCLM) of Bos taurus (Bovine).